The chain runs to 137 residues: Large ribosomal subunit protein uL16 (137 aa).

This sequence belongs to the universal ribosomal protein uL16 family. As to quaternary structure, part of the 50S ribosomal subunit.

Binds 23S rRNA and is also seen to make contacts with the A and possibly P site tRNAs. In Sinorhizobium medicae (strain WSM419) (Ensifer medicae), this protein is Large ribosomal subunit protein uL16.